The sequence spans 464 residues: MSSLEKNIEYTSVSSIAGPLIVVEGIKGVAYGEIVSITCPSGEKRTGQVLEAREDVAVVQVFEGTTALNTSETKIRFVGETAKLGVSTDMLGRIFNGAGKPLDGGPDIIAEDKIDINGYPLNPVSRQSPNDFVQTGISTIDGTNTLVRGQKIPIFSGSGLPHNLLAAQIARQAKVRGSDEQFAVVFAAMGITAEESNYFMNEFKRTGALENAVVFINLADDPAIERILTPRIALTTAEYLAYEKGMHVLVIMTDITNYCEALREIAAARNEVPGRRGYPGYMYTDLATLYERAGRVKGKSGTVTQIPILTMPHDDITHPIPDLTGYITEGQIVLSRELNRKGIYPPVDVLPSLSRLAGNGVGEGKTRDDHSKVISQVYAGYAEGIGLRDLVAVVGEESLSERDRAYLKLADVFEKKFVQQGKDEDRSIEETLDIVWDILTILPEEELKRVSEDLIKKYHPNHKK.

The protein belongs to the ATPase alpha/beta chains family. Has multiple subunits with at least A(3), B(3), C, D, E, F, H, I and proteolipid K(x).

Its subcellular location is the cell membrane. In terms of biological role, component of the A-type ATP synthase that produces ATP from ADP in the presence of a proton gradient across the membrane. The B chain is a regulatory subunit. This Methanococcus aeolicus (strain ATCC BAA-1280 / DSM 17508 / OCM 812 / Nankai-3) protein is A-type ATP synthase subunit B.